The following is a 260-amino-acid chain: Uridylate kinase (260 aa).

ATP is bound at residue 29–32 (KLSG). An involved in allosteric activation by GTP region spans residues 37 to 42 (GDLGYG). Residue glycine 71 participates in UMP binding. 2 residues coordinate ATP: glycine 72 and arginine 76. UMP-binding positions include aspartate 91 and 152–159 (SGNPFFTT). ATP contacts are provided by threonine 179, tyrosine 185, and aspartate 188.

The protein belongs to the UMP kinase family. In terms of assembly, homohexamer.

It is found in the cytoplasm. The catalysed reaction is UMP + ATP = UDP + ADP. It functions in the pathway pyrimidine metabolism; CTP biosynthesis via de novo pathway; UDP from UMP (UMPK route): step 1/1. Its activity is regulated as follows. Allosterically activated by GTP. Inhibited by UTP. Functionally, catalyzes the reversible phosphorylation of UMP to UDP. This is Uridylate kinase from Synechocystis sp. (strain ATCC 27184 / PCC 6803 / Kazusa).